An 819-amino-acid polypeptide reads, in one-letter code: ATP-dependent DNA helicase PIF4 (819 aa).

The N-terminal 84 residues, 1 to 84, are a transit peptide targeting the mitochondrion; it reads MLLNSTRTLL…RQASSAGHND (84 aa). A disordered region spans residues 76-101; sequence QASSAGHNDLGLQEKEKSSGDESAFS. An ATP-binding site is contributed by 126 to 133; the sequence is GGAGVGKS. The DNA-binding element occupies 734-754; sequence HIIYVAASRVKKFSQLRMINV.

This sequence belongs to the helicase family. PIF1 subfamily. Monomer. Mg(2+) is required as a cofactor.

The protein localises to the mitochondrion matrix. It is found in the kinetoplast. The enzyme catalyses Couples ATP hydrolysis with the unwinding of duplex DNA at the replication fork by translocating in the 5'-3' direction. This creates two antiparallel DNA single strands (ssDNA). The leading ssDNA polymer is the template for DNA polymerase III holoenzyme which synthesizes a continuous strand.. The catalysed reaction is ATP + H2O = ADP + phosphate + H(+). Its function is as follows. DNA-dependent ATPase and 5'-3' DNA helicase required for the maintenance of mitochondrial (kinetoplast) genome stability. In Trypanosoma brucei brucei (strain 927/4 GUTat10.1), this protein is ATP-dependent DNA helicase PIF4.